Consider the following 496-residue polypeptide: Rhamnulokinase (496 aa).

13 to 17 contacts ATP; it reads ASSGR. Substrate contacts are provided by residues glycine 83 and 236–238; that span reads HDT. Aspartate 237 serves as the catalytic Proton acceptor. ATP is bound at residue threonine 259. Residue asparagine 296 coordinates substrate. ATP is bound at residue glutamine 304. The cysteines at positions 353 and 370 are disulfide-linked. Glycine 402 provides a ligand contact to ATP. The cysteines at positions 413 and 417 are disulfide-linked.

The protein belongs to the rhamnulokinase family. It depends on Mg(2+) as a cofactor.

It catalyses the reaction L-rhamnulose + ATP = L-rhamnulose 1-phosphate + ADP + H(+). It participates in carbohydrate degradation; L-rhamnose degradation; glycerone phosphate from L-rhamnose: step 2/3. Its function is as follows. Involved in the catabolism of L-rhamnose (6-deoxy-L-mannose). Catalyzes the transfer of the gamma-phosphate group from ATP to the 1-hydroxyl group of L-rhamnulose to yield L-rhamnulose 1-phosphate. The protein is Rhamnulokinase of Pectobacterium atrosepticum (strain SCRI 1043 / ATCC BAA-672) (Erwinia carotovora subsp. atroseptica).